The chain runs to 131 residues: D-ribose pyranase (131 aa).

The active-site Proton donor is the H20. Substrate is bound by residues D28, H98, and 120-122 (YAN).

The protein belongs to the RbsD / FucU family. RbsD subfamily. As to quaternary structure, homodecamer.

Its subcellular location is the cytoplasm. It catalyses the reaction beta-D-ribopyranose = beta-D-ribofuranose. Its pathway is carbohydrate metabolism; D-ribose degradation; D-ribose 5-phosphate from beta-D-ribopyranose: step 1/2. In terms of biological role, catalyzes the interconversion of beta-pyran and beta-furan forms of D-ribose. The polypeptide is D-ribose pyranase (Clostridium tetani (strain Massachusetts / E88)).